We begin with the raw amino-acid sequence, 394 residues long: Acetate kinase (394 aa).

Residue asparagine 7 participates in Mg(2+) binding. Lysine 14 contributes to the ATP binding site. Substrate is bound at residue arginine 90. Aspartate 147 functions as the Proton donor/acceptor in the catalytic mechanism. Residues 204–208 (HLGNG), 278–280 (DLR), and 326–330 (GIGEN) contribute to the ATP site. Glutamate 380 contacts Mg(2+).

The protein belongs to the acetokinase family. Homodimer. Mg(2+) is required as a cofactor. Requires Mn(2+) as cofactor.

It is found in the cytoplasm. The catalysed reaction is acetate + ATP = acetyl phosphate + ADP. It functions in the pathway metabolic intermediate biosynthesis; acetyl-CoA biosynthesis; acetyl-CoA from acetate: step 1/2. Its function is as follows. Catalyzes the formation of acetyl phosphate from acetate and ATP. Can also catalyze the reverse reaction. This is Acetate kinase from Flavobacterium johnsoniae (strain ATCC 17061 / DSM 2064 / JCM 8514 / BCRC 14874 / CCUG 350202 / NBRC 14942 / NCIMB 11054 / UW101) (Cytophaga johnsonae).